The sequence spans 220 residues: Pyridoxine/pyridoxamine 5'-phosphate oxidase (220 aa).

Residues 8–11 (RKSY) and Lys66 each bind substrate. Residues 61–66 (RVVLIK), 76–77 (FT), Arg82, and Lys83 each bind FMN. Substrate-binding residues include Tyr123, Arg127, and Ser131. FMN-binding positions include 140–141 (QS) and Trp184. 190–192 (RLH) contributes to the substrate binding site. Arg194 is an FMN binding site.

It belongs to the pyridoxamine 5'-phosphate oxidase family. Homodimer. FMN serves as cofactor.

The catalysed reaction is pyridoxamine 5'-phosphate + O2 + H2O = pyridoxal 5'-phosphate + H2O2 + NH4(+). It carries out the reaction pyridoxine 5'-phosphate + O2 = pyridoxal 5'-phosphate + H2O2. Its pathway is cofactor metabolism; pyridoxal 5'-phosphate salvage; pyridoxal 5'-phosphate from pyridoxamine 5'-phosphate: step 1/1. It participates in cofactor metabolism; pyridoxal 5'-phosphate salvage; pyridoxal 5'-phosphate from pyridoxine 5'-phosphate: step 1/1. Catalyzes the oxidation of either pyridoxine 5'-phosphate (PNP) or pyridoxamine 5'-phosphate (PMP) into pyridoxal 5'-phosphate (PLP). In Albidiferax ferrireducens (strain ATCC BAA-621 / DSM 15236 / T118) (Rhodoferax ferrireducens), this protein is Pyridoxine/pyridoxamine 5'-phosphate oxidase.